Here is a 524-residue protein sequence, read N- to C-terminus: Cytokinin dehydrogenase 7 (524 aa).

Residues 1 to 22 (MAARCSIAFMIMASCLSVVVSG) form the signal peptide. N-linked (GlcNAc...) asparagine glycosylation occurs at Asn-42. The 179-residue stretch at 55–233 (VAAAPEAVLH…TRARIGLMPA (179 aa)) folds into the FAD-binding PCMH-type domain. The FAD site is built by Gly-91 and Gly-93. A Pros-8alpha-FAD histidine modification is found at His-94. FAD contacts are provided by Ser-95 and Gln-99. Residue Asn-121 is glycosylated (N-linked (GlcNAc...) asparagine). 5 residues coordinate FAD: Asp-157, Thr-162, Ser-168, Ile-172, and Ile-223. 2 N-linked (GlcNAc...) asparagine glycosylation sites follow: Asn-277 and Asn-320. FAD contacts are provided by Tyr-472, Ser-507, and Gln-510.

The protein belongs to the oxygen-dependent FAD-linked oxidoreductase family. Monomer. Requires FAD as cofactor.

The protein resides in the secreted. Its subcellular location is the extracellular space. The catalysed reaction is N(6)-dimethylallyladenine + A + H2O = 3-methyl-2-butenal + adenine + AH2. Catalyzes the oxidation of cytokinins, a family of N(6)-substituted adenine derivatives that are plant hormones, where the substituent is an isopentenyl group. In Oryza sativa subsp. japonica (Rice), this protein is Cytokinin dehydrogenase 7 (CKX7).